We begin with the raw amino-acid sequence, 317 residues long: Aspartate carbamoyltransferase catalytic subunit (317 aa).

2 residues coordinate carbamoyl phosphate: Arg66 and Thr67. Residue Lys94 participates in L-aspartate binding. Residues Arg116, His144, and Gln147 each contribute to the carbamoyl phosphate site. Residues Arg177 and Arg231 each coordinate L-aspartate. Carbamoyl phosphate-binding residues include Gly272 and Pro273.

Belongs to the aspartate/ornithine carbamoyltransferase superfamily. ATCase family. Heterododecamer (2C3:3R2) of six catalytic PyrB chains organized as two trimers (C3), and six regulatory PyrI chains organized as three dimers (R2).

It carries out the reaction carbamoyl phosphate + L-aspartate = N-carbamoyl-L-aspartate + phosphate + H(+). The protein operates within pyrimidine metabolism; UMP biosynthesis via de novo pathway; (S)-dihydroorotate from bicarbonate: step 2/3. Catalyzes the condensation of carbamoyl phosphate and aspartate to form carbamoyl aspartate and inorganic phosphate, the committed step in the de novo pyrimidine nucleotide biosynthesis pathway. The chain is Aspartate carbamoyltransferase catalytic subunit from Rhodopseudomonas palustris (strain HaA2).